The primary structure comprises 217 residues: NADPH-dependent 3-demethoxyubiquinone 3-hydroxylase, mitochondrial (217 aa).

The N-terminal 23 residues, 1 to 23 (MSAAGAIAAASVGRLRTGVRRPF), are a transit peptide targeting the mitochondrion. Tandem repeats lie at residues 48–129 (AVDR…TALL) and 130–217 (GKEG…SERF). Residues 48-217 (AVDRIIRVDH…SAAIYLSERF (170 aa)) are 2 X approximate tandem repeats. NADH is bound at residue Arg-51. Glu-60, Glu-90, His-93, Glu-142, Glu-178, and His-181 together coordinate Fe cation. Residues Tyr-212 and Arg-216 each contribute to the NADH site.

This sequence belongs to the COQ7 family. As to quaternary structure, component of a multi-subunit COQ enzyme complex. Interacts with COQ8B and COQ6. Interacts with COQ9. Fe cation serves as cofactor. As to expression, highly expressed in tissues with high energy demand such as heart, muscle, liver, and kidney.

The protein resides in the mitochondrion inner membrane. It carries out the reaction a 5-methoxy-2-methyl-3-(all-trans-polyprenyl)benzoquinone + NADH + O2 = a 3-demethylubiquinone + NAD(+) + H2O. It functions in the pathway cofactor biosynthesis; ubiquinone biosynthesis. Its function is as follows. Catalyzes the hydroxylation of the 5-methoxy-2-methyl-3-(all-trans-polyprenyl)benzoquinone at the C6 position and participates in the biosynthesis of ubiquinone. Catalyzes the reaction through a substrate-mediated reduction pathway, whereby NADH shuttles electrons to 5-methoxy-2-methyl-3-(all-trans-decaprenyl)benzoquinone, which then transfers the electrons to the two Fe(3+) centers. The binding of 5-methoxy-2-methyl-3-(all-trans-polyprenyl)benzoquinone (DMQn) mediates reduction of the diiron center by nicotinamide adenine dinucleotide (NADH) and initiates oxygen activation for subsequent DMQ hydroxylation. The physiological substrates are 5-methoxy-2-methyl-3-(all-trans-nonaprenyl)benzoquinone (DMQ(9)) and 5-methoxy-2-methyl-3-(all-trans-decaprenyl)benzoquinone (DMQ(10)), however in vitro the enzyme does not have any specificity concerning the length of the polyprenyl tail, and accepts tails of various lengths with similar efficiency. Also has a structural role in the COQ enzyme complex, stabilizing other COQ polypeptides. Involved in lifespan determination in a ubiquinone-independent manner. Plays a role in modulating mitochondrial stress responses, acting in the nucleus, perhaps via regulating gene expression, independent of its characterized mitochondrial function in ubiquinone biosynthesis. This chain is NADPH-dependent 3-demethoxyubiquinone 3-hydroxylase, mitochondrial, found in Mus musculus (Mouse).